The chain runs to 498 residues: Glycerol kinase (498 aa).

Residue T13 coordinates ADP. Residues T13, T14, and S15 each coordinate ATP. T13 contributes to the sn-glycerol 3-phosphate binding site. An ADP-binding site is contributed by R17. Residues R83, E84, Y135, and D244 each contribute to the sn-glycerol 3-phosphate site. Positions 83, 84, 135, 244, and 245 each coordinate glycerol. Residues T266 and G309 each coordinate ADP. ATP-binding residues include T266, G309, Q313, and G410. Residues G410 and N414 each contribute to the ADP site.

This sequence belongs to the FGGY kinase family. In terms of assembly, homotetramer and homodimer (in equilibrium).

It carries out the reaction glycerol + ATP = sn-glycerol 3-phosphate + ADP + H(+). The protein operates within polyol metabolism; glycerol degradation via glycerol kinase pathway; sn-glycerol 3-phosphate from glycerol: step 1/1. With respect to regulation, activated by phosphorylation and inhibited by fructose 1,6-bisphosphate (FBP). Its function is as follows. Key enzyme in the regulation of glycerol uptake and metabolism. Catalyzes the phosphorylation of glycerol to yield sn-glycerol 3-phosphate. The polypeptide is Glycerol kinase (Symbiobacterium thermophilum (strain DSM 24528 / JCM 14929 / IAM 14863 / T)).